A 354-amino-acid chain; its full sequence is Guanine nucleotide-binding protein G(o) subunit alpha (354 aa).

Residue G2 is the site of N-myristoyl glycine attachment. C3 carries the S-palmitoyl cysteine lipid modification. Positions 32–354 (KDIKLLLLGA…ANNLRGCGLY (323 aa)) constitute a G-alpha domain. The segment at 35 to 48 (KLLLLGAGESGKST) is G1 motif. GTP-binding positions include 40-47 (GAGESGKS), 176-182 (LRTRVKT), 201-205 (DVGGQ), 270-273 (NKKD), and A326. Positions 47 and 182 each coordinate Mg(2+). Positions 174 to 182 (DILRTRVKT) are G2 motif. The interval 197-206 (FKLFDVGGQR) is G3 motif. The interval 266-273 (ILFLNKKD) is G4 motif. The interval 324-329 (TCATDT) is G5 motif.

It belongs to the G-alpha family. G(i/o/t/z) subfamily. In terms of assembly, g proteins are composed of 3 units; alpha, beta and gamma. The alpha chain contains the guanine nucleotide binding site.

Guanine nucleotide-binding proteins (G proteins) are involved as modulators or transducers in various transmembrane signaling systems. The G(o) protein function is not clear. In Planorbella trivolvis (Marsh rams-horn), this protein is Guanine nucleotide-binding protein G(o) subunit alpha.